Consider the following 488-residue polypeptide: Serine hydroxymethyltransferase, mitochondrial (488 aa).

A mitochondrion-targeting transit peptide spans 1–20; that stretch reads MAVLRQFVKNSYSSIPKRFY. The residue at position 265 (Lys-265) is an N6-(pyridoxal phosphate)lysine.

This sequence belongs to the SHMT family. As to quaternary structure, homotetramer. Pyridoxal 5'-phosphate is required as a cofactor.

It is found in the mitochondrion. The catalysed reaction is (6R)-5,10-methylene-5,6,7,8-tetrahydrofolate + glycine + H2O = (6S)-5,6,7,8-tetrahydrofolate + L-serine. The protein operates within one-carbon metabolism; tetrahydrofolate interconversion. Interconversion of serine and glycine. The polypeptide is Serine hydroxymethyltransferase, mitochondrial (shm2) (Schizosaccharomyces pombe (strain 972 / ATCC 24843) (Fission yeast)).